The following is a 1022-amino-acid chain: Collagen alpha-2(VI) chain (1022 aa).

A signal peptide spans 1–27 (MSRRTAEMFQQAFLSTLLCVALVPLHA). The segment at 28–255 (QFDDEPVTSC…CYKMTCLEIA (228 aa)) is nonhelical region. The region spanning 44–168 (PISVYFVIDT…VITDGHVTGS (125 aa)) is the VWFA 1 domain. N141 and N215 each carry an N-linked (GlcNAc...) asparagine glycan. The tract at residues 256-590 (GPAGPKGYRG…PGPPGDPGLT (335 aa)) is triple-helical region. The interval 263–587 (YRGQKGAKGN…EGTPGPPGDP (325 aa)) is disordered. The span at 287-299 (DPGIEGPIGYPGP) shows a compositional bias: low complexity. Positions 306-318 (KGEKGEIGSDGRR) are enriched in basic and acidic residues. N-linked (GlcNAc...) asparagine glycosylation is present at N327. 2 consecutive short sequence motifs (cell attachment site) follow at residues 348-350 (RGD) and 366-368 (RGD). Residues 363-377 (QGERGDEGMKGDPGR) are compositionally biased toward basic and acidic residues. The span at 389-399 (EKGSPGIPGNP) shows a compositional bias: low complexity. 5 short sequence motifs (cell attachment site) span residues 426-428 (RGD), 444-446 (RGD), 465-467 (RGD), 489-491 (RGD), and 498-500 (RGD). Residues 514–519 (GFSYPG) are interruption in collagenous region. Over residues 534 to 543 (GPKGGRGELG) the composition is skewed to gly residues. The interval 591 to 1022 (DCDVMTYVRE…FFDRFIRWIC (432 aa)) is nonhelical region. 2 consecutive VWFA domains span residues 613 to 738 (ALDI…YDPR) and 833 to 957 (DIVF…ITGS). 2 N-linked (GlcNAc...) asparagine glycosylation sites follow: N630 and N897.

This sequence belongs to the type VI collagen family. In terms of assembly, trimers composed of three different chains: alpha 1(VI), alpha 2(VI), and alpha 3(VI). Prolines at the third position of the tripeptide repeating unit (G-X-Y) are hydroxylated in some or all of the chains.

It is found in the secreted. The protein resides in the extracellular space. The protein localises to the extracellular matrix. Its function is as follows. Collagen VI acts as a cell-binding protein. The protein is Collagen alpha-2(VI) chain (COL6A2) of Gallus gallus (Chicken).